A 20-amino-acid polypeptide reads, in one-letter code: Astacin-like peptidase p18 (20 aa).

The Peptidase M12A domain occupies 1–20 (NAIPGNYYRWPYAKVPYVID).

The cofactor is Zn(2+).

Functionally, active against casein. Has a role as a digestive enzyme. In Argiope aurantia (Black-and-yellow garden spider), this protein is Astacin-like peptidase p18.